Consider the following 380-residue polypeptide: Cytochrome b (380 aa).

Transmembrane regions (helical) follow at residues 34-54 (FGSL…LLAM), 78-99 (WLIR…YLHI), 114-134 (WNIG…GYVL), and 179-199 (FFAL…VHLT). Positions 84 and 98 each coordinate heme b. Heme b is bound by residues H183 and H197. Position 202 (H202) interacts with a ubiquinone. 4 consecutive transmembrane segments (helical) span residues 227–247 (IKDM…ALFS), 289–309 (LGGV…PLLH), 321–341 (LLPF…WVGS), and 348–368 (FIII…VLFP).

This sequence belongs to the cytochrome b family. The cytochrome bc1 complex contains 11 subunits: 3 respiratory subunits (MT-CYB, CYC1 and UQCRFS1), 2 core proteins (UQCRC1 and UQCRC2) and 6 low-molecular weight proteins (UQCRH/QCR6, UQCRB/QCR7, UQCRQ/QCR8, UQCR10/QCR9, UQCR11/QCR10 and a cleavage product of UQCRFS1). This cytochrome bc1 complex then forms a dimer. It depends on heme b as a cofactor.

It is found in the mitochondrion inner membrane. Component of the ubiquinol-cytochrome c reductase complex (complex III or cytochrome b-c1 complex) that is part of the mitochondrial respiratory chain. The b-c1 complex mediates electron transfer from ubiquinol to cytochrome c. Contributes to the generation of a proton gradient across the mitochondrial membrane that is then used for ATP synthesis. The polypeptide is Cytochrome b (MT-CYB) (Gymnorhina tibicen (Australian magpie)).